We begin with the raw amino-acid sequence, 564 residues long: MFS-type transporter dmxR4 (564 aa).

The tract at residues 1 to 61 (MSSERPDGSA…PAKEAPAKPA (61 aa)) is disordered. Residues 25–44 (TDSSRTSNDASQTSQDTAVQ) are compositionally biased toward polar residues. Over residues 47–57 (PPKEAPAKEAP) the composition is skewed to basic and acidic residues. Transmembrane regions (helical) follow at residues 71–91 (IALL…DRSI), 106–126 (AGDI…FQLL), 138–158 (TVFV…GAAP), 169–189 (LAGI…VFLI), and 199–219 (GLFG…GGGF). N222 carries N-linked (GlcNAc...) asparagine glycosylation. A run of 7 helical transmembrane segments spans residues 227–247 (WCFY…ALWM), 265–285 (GLDL…LLAL), 299–319 (IIAL…LQAF), 348–368 (GVHL…GGFF), 376–396 (SPLA…IYTF), 405–425 (WIGS…APNL), and 438–458 (SALA…VSVG). N469 carries an N-linked (GlcNAc...) asparagine glycan. Helical transmembrane passes span 470-490 (LSWI…VSFL) and 512-532 (VFMI…SMEW). The disordered stretch occupies residues 534–564 (SVKSRGSWDEKPAAKPTDKPTEEKKVPPEAV). Over residues 539-564 (GSWDEKPAAKPTDKPTEEKKVPPEAV) the composition is skewed to basic and acidic residues.

It belongs to the major facilitator superfamily. TCR/Tet family.

It localises to the membrane. MFS-type transporter; part of the gene cluster that mediates the biosynthesis of the dimeric xanthones cryptosporioptides. The sequence is that of MFS-type transporter dmxR4 from Cryptosporiopsis sp. (strain 8999).